The chain runs to 814 residues: MRVKDPTKALPEKAKRSKRPTVPHDEDSSDDIAVGLTCQHVSHAISVNHVKRAIAENLWSVCSECLKERRFYDGQLVLTSDIWLCLKCGFQGCGKNSESQHSLKHFKSSRTEPHCIIINLSTWIIWCYECDEKLSTHCNKKVLAQIVDFLQKHASKTQTSAFSRIMKLCEEKCETDEIQKGGKCRNLSVRGITNLGNTCFFNAVMQNLAQTYTLTDLMNEIKESSTKLKIFPSSDSQLDPLVVELSRPGPLTSALFLFLHSMKETEKGPLSPKVLFNQLCQKAPRFKDFQQQDSQELLHYLLDAVRTEETKRIQASILKAFNNPTTKTADDETRKKVKAYGKEGVKMNFIDRIFIGELTSTVMCEECANISTVKDPFIDISLPIIEERVSKPLLWGRMNKYRSLRETDHDRYSGNVTIENIHQPRAAKKHSSSKDKSQLIHDRKCIRKLSSGETVTYQKNENLEMNGDSLMFASLMNSESRLNESPTDDSEKEASHSESNVDADSEPSESESASKQTGLFRSSSGSGVQPDGPLYPLSAGKLLYTKETDSGDKEMAEAISELRLSSTVTGDQDFDRENQPLNISNNLCFLEGKHLRSYSPQNAFQTLSQSYITTSKECSIQSCLYQFTSMELLMGNNKLLCENCTKNKQKYQEETSFAEKKVEGVYTNARKQLLISAVPAVLILHLKRFHQAGLSLRKVNRHVDFPLMLDLAPFCSATCKNASVGDKVLYGLYGIVEHSGSMREGHYTAYVKVRTPSRKLSEHNTKKKNVPGLKAADNESAGQWVHVSDTYLQVVPESRALSAQAYLLFYERVL.

A compositionally biased stretch (basic and acidic residues) spans 1–14 (MRVKDPTKALPEKA). The segment at 1 to 28 (MRVKDPTKALPEKAKRSKRPTVPHDEDS) is disordered. Positions 1–62 (MRVKDPTKAL…AIAENLWSVC (62 aa)) are interaction with ERCC1. 2 positions are modified to phosphoserine: serine 28 and serine 29. The UBP-type zinc finger occupies 36–153 (LTCQHVSHAI…AQIVDFLQKH (118 aa)). Zn(2+) contacts are provided by cysteine 38, histidine 40, cysteine 62, cysteine 65, cysteine 85, cysteine 88, cysteine 93, histidine 101, histidine 105, histidine 114, cysteine 127, and cysteine 130. One can recognise a USP domain in the interval 190–813 (RGITNLGNTC…QAYLLFYERV (624 aa)). Cysteine 199 (nucleophile) is an active-site residue. Disordered regions lie at residues 418 to 443 (IENI…IHDR) and 479 to 533 (ESRL…PDGP). Residues 432-443 (SSKDKSQLIHDR) are compositionally biased toward basic and acidic residues. A phosphoserine mark is found at serine 508 and serine 526. Residues 515-527 (KQTGLFRSSSGSG) are compositionally biased toward polar residues. The Proton acceptor role is filled by histidine 746.

The protein belongs to the peptidase C19 family. Interacts with ERCC1. The catalytically active form interacts with SPDL1. As to expression, widely expressed. High expression is detected in the cerebellum. In the eye, it is expressed at high levels in the optic nerve, sclera and retina, with relatively low levels in the choroid, lens and retinal pigment epithelium.

It localises to the photoreceptor inner segment. Its subcellular location is the cytoplasm. The protein resides in the nucleus. The catalysed reaction is Thiol-dependent hydrolysis of ester, thioester, amide, peptide and isopeptide bonds formed by the C-terminal Gly of ubiquitin (a 76-residue protein attached to proteins as an intracellular targeting signal).. Its function is as follows. Catalyzes the deubiquitination of SPDL1. Plays a role in the repair of UV-induced DNA damage via deubiquitination of ERCC1, promoting its recruitment to DNA damage sites. May be involved in the maintenance of photoreceptor function. May play a role in normal retinal development. Plays a role in cell migration. The polypeptide is Ubiquitin carboxyl-terminal hydrolase 45 (USP45) (Homo sapiens (Human)).